A 297-amino-acid polypeptide reads, in one-letter code: Proline iminopeptidase (297 aa).

Residues 26–131 form the AB hydrolase-1 domain; sequence VLLLHGGPAM…GLLVSNMMAS (106 aa). The Nucleophile role is filled by S103. D243 is an active-site residue. Residue H270 is the Proton donor of the active site.

Belongs to the peptidase S33 family. As to quaternary structure, monomer.

The catalysed reaction is Release of N-terminal proline from a peptide.. In terms of biological role, releases the N-terminal proline from various substrates. In Flavobacterium johnsoniae (strain ATCC 17061 / DSM 2064 / JCM 8514 / BCRC 14874 / CCUG 350202 / NBRC 14942 / NCIMB 11054 / UW101) (Cytophaga johnsonae), this protein is Proline iminopeptidase (fpaP).